We begin with the raw amino-acid sequence, 622 residues long: Histone-arginine methyltransferase CARMER (622 aa).

The 308-residue stretch at 118–425 (ASQYFQFYGY…QRQSYDVEID (308 aa)) folds into the SAM-dependent MTase PRMT-type domain. S-adenosyl-L-methionine contacts are provided by Q131, R140, G164, E186, E215, and T243. Residue R478 is modified to Asymmetric dimethylarginine; by autocatalysis. 2 disordered regions span residues 513-556 (ANGG…QQQQ) and 602-622 (QPIL…NQFY). The span at 536-556 (QQQQQQQQQQQQAAVGPQQQQ) shows a compositional bias: low complexity.

Belongs to the class I-like SAM-binding methyltransferase superfamily. Protein arginine N-methyltransferase family. In terms of assembly, homodimer. The dimethylated protein is the major form.

Its subcellular location is the cytoplasm. It localises to the nucleus. It catalyses the reaction L-arginyl-[protein] + 2 S-adenosyl-L-methionine = N(omega),N(omega)-dimethyl-L-arginyl-[protein] + 2 S-adenosyl-L-homocysteine + 2 H(+). In terms of biological role, methylates (mono- and asymmetric dimethylation) the guanidino nitrogens of arginyl residues in proteins. May methylate histone H3 at 'Arg-17' and activate transcription via chromatin remodeling. This Anopheles gambiae (African malaria mosquito) protein is Histone-arginine methyltransferase CARMER.